The following is a 402-amino-acid chain: Mannonate dehydratase (402 aa).

The protein belongs to the mannonate dehydratase family. Fe(2+) serves as cofactor. The cofactor is Mn(2+).

It catalyses the reaction D-mannonate = 2-dehydro-3-deoxy-D-gluconate + H2O. It participates in carbohydrate metabolism; pentose and glucuronate interconversion. In terms of biological role, catalyzes the dehydration of D-mannonate. The chain is Mannonate dehydratase from Rhizobium meliloti (strain 1021) (Ensifer meliloti).